The following is a 255-amino-acid chain: Ribosomal RNA small subunit methyltransferase A (255 aa).

The S-adenosyl-L-methionine site is built by Asn-12, Leu-14, Gly-39, Glu-60, Asp-84, and Asn-106.

This sequence belongs to the class I-like SAM-binding methyltransferase superfamily. rRNA adenine N(6)-methyltransferase family. RsmA subfamily.

It is found in the cytoplasm. It catalyses the reaction adenosine(1518)/adenosine(1519) in 16S rRNA + 4 S-adenosyl-L-methionine = N(6)-dimethyladenosine(1518)/N(6)-dimethyladenosine(1519) in 16S rRNA + 4 S-adenosyl-L-homocysteine + 4 H(+). In terms of biological role, specifically dimethylates two adjacent adenosines (A1518 and A1519) in the loop of a conserved hairpin near the 3'-end of 16S rRNA in the 30S particle. May play a critical role in biogenesis of 30S subunits. The polypeptide is Ribosomal RNA small subunit methyltransferase A (Herminiimonas arsenicoxydans).